The chain runs to 637 residues: Chaperone protein DnaK (637 aa).

Thr-196 bears the Phosphothreonine; by autocatalysis mark. Disordered stretches follow at residues 484-528 (KATG…EVDT) and 598-637 (TEAGAPGAAGAAGAAGQGQSASSGKDDEVKNADFEVVDDK). The span at 501-528 (SETEIEKMKKDASSHADEDKKKKEEVDT) shows a compositional bias: basic and acidic residues. Residues 600–620 (AGAPGAAGAAGAAGQGQSASS) show a composition bias toward low complexity. A compositionally biased stretch (basic and acidic residues) spans 621–637 (GKDDEVKNADFEVVDDK).

It belongs to the heat shock protein 70 family.

In terms of biological role, acts as a chaperone. The protein is Chaperone protein DnaK of Chloroherpeton thalassium (strain ATCC 35110 / GB-78).